Here is a 441-residue protein sequence, read N- to C-terminus: ATP-dependent protease ATPase subunit HslU (441 aa).

Residues I18, 60–65, D254, E319, and R391 each bind ATP; that span reads GVGKTE.

The protein belongs to the ClpX chaperone family. HslU subfamily. In terms of assembly, a double ring-shaped homohexamer of HslV is capped on each side by a ring-shaped HslU homohexamer. The assembly of the HslU/HslV complex is dependent on binding of ATP.

The protein resides in the cytoplasm. Its function is as follows. ATPase subunit of a proteasome-like degradation complex; this subunit has chaperone activity. The binding of ATP and its subsequent hydrolysis by HslU are essential for unfolding of protein substrates subsequently hydrolyzed by HslV. HslU recognizes the N-terminal part of its protein substrates and unfolds these before they are guided to HslV for hydrolysis. This is ATP-dependent protease ATPase subunit HslU from Actinobacillus succinogenes (strain ATCC 55618 / DSM 22257 / CCUG 43843 / 130Z).